The primary structure comprises 348 residues: Hereditary hemochromatosis protein homolog (348 aa).

Positions 1–22 (MGPRARPALFFLILLRTVAAQG) are cleaved as a signal peptide. The tract at residues 23–114 (RPPRSHSLRY…IMDNHNHSKE (92 aa)) is alpha-1. The Extracellular segment spans residues 23-306 (RPPRSHSLRY…WEPSLSNTLV (284 aa)). Asn110, Asn130, and Asn234 each carry an N-linked (GlcNAc...) asparagine glycan. The segment at 115-205 (SHTLQVILGC…ELGRGVLDQQ (91 aa)) is alpha-2. Disulfide bonds link Cys124-Cys187 and Cys225-Cys282. Residues 206–297 (VPPLVKVTHH…GLDQPLTATW (92 aa)) form an alpha-3 region. Positions 207–296 (PPLVKVTHHV…PGLDQPLTAT (90 aa)) constitute an Ig-like C1-type domain. The segment at 298–306 (EPSLSNTLV) is connecting peptide. The chain crosses the membrane as a helical span at residues 307–330 (TGVISGIAVCVIIFFIGILFRILR). The Cytoplasmic segment spans residues 331–348 (KRQASRGAMGDYVLGECE).

It belongs to the MHC class I family. As to quaternary structure, binds TFR through the extracellular domain in a pH-dependent manner.

It localises to the cell membrane. Binds to transferrin receptor (TFR) and reduces its affinity for iron-loaded transferrin. This chain is Hereditary hemochromatosis protein homolog (HFE), found in Ceratotherium simum (White rhinoceros).